Consider the following 65-residue polypeptide: Large ribosomal subunit protein bL35 (65 aa).

Disordered stretches follow at residues 1–23 (MPKL…GGFK) and 36–65 (MTTK…MPYA). Polar residues predominate over residues 54–65 (DTTSLVQQMPYA).

It belongs to the bacterial ribosomal protein bL35 family.

This chain is Large ribosomal subunit protein bL35, found in Francisella tularensis subsp. tularensis (strain FSC 198).